A 548-amino-acid polypeptide reads, in one-letter code: Probable malate:quinone oxidoreductase (548 aa).

Residues 520–548 (YDRPQAADSTPKPQLKPQPVQKEVADIAL) form a disordered region. Residues 530-541 (PKPQLKPQPVQK) are compositionally biased toward low complexity.

It belongs to the MQO family. FAD serves as cofactor.

It catalyses the reaction (S)-malate + a quinone = a quinol + oxaloacetate. Its pathway is carbohydrate metabolism; tricarboxylic acid cycle; oxaloacetate from (S)-malate (quinone route): step 1/1. This chain is Probable malate:quinone oxidoreductase, found in Shigella dysenteriae serotype 1 (strain Sd197).